A 71-amino-acid polypeptide reads, in one-letter code: DNA-directed RNA polymerases I, II, and III subunit RPABC5 (71 aa).

Zn(2+) is bound by residues cysteine 7, cysteine 10, cysteine 44, and cysteine 45.

The protein belongs to the archaeal Rpo10/eukaryotic RPB10 RNA polymerase subunit family. As to quaternary structure, component of the RNA polymerase I (Pol I), RNA polymerase II (Pol II) and RNA polymerase III (Pol III) complexes consisting of at least 13, 12 and 17 subunits, respectively.

It is found in the nucleus. DNA-dependent RNA polymerase catalyzes the transcription of DNA into RNA using the four ribonucleoside triphosphates as substrates. Common component of RNA polymerases I, II and III which synthesize ribosomal RNA precursors, mRNA precursors and many functional non-coding RNAs, and a small RNAs, such as 5S rRNA and tRNAs, respectively. Pol II is the central component of the basal RNA polymerase II transcription machinery. Pols are composed of mobile elements that move relative to each other. In Pol II, RBP10 is part of the core element with the central large cleft. The protein is DNA-directed RNA polymerases I, II, and III subunit RPABC5 of Brassica napus (Rape).